The primary structure comprises 102 residues: NADH-quinone oxidoreductase subunit K (102 aa).

3 helical membrane passes run L2–L22, I26–T46, and V58–I78.

The protein belongs to the complex I subunit 4L family. As to quaternary structure, NDH-1 is composed of 14 different subunits. Subunits NuoA, H, J, K, L, M, N constitute the membrane sector of the complex.

The protein resides in the cell inner membrane. The catalysed reaction is a quinone + NADH + 5 H(+)(in) = a quinol + NAD(+) + 4 H(+)(out). In terms of biological role, NDH-1 shuttles electrons from NADH, via FMN and iron-sulfur (Fe-S) centers, to quinones in the respiratory chain. The immediate electron acceptor for the enzyme in this species is believed to be ubiquinone. Couples the redox reaction to proton translocation (for every two electrons transferred, four hydrogen ions are translocated across the cytoplasmic membrane), and thus conserves the redox energy in a proton gradient. The polypeptide is NADH-quinone oxidoreductase subunit K (Campylobacter fetus subsp. fetus (strain 82-40)).